Consider the following 147-residue polypeptide: Hemoglobin subunit beta-2 (147 aa).

Val-2 carries the N-acetylvaline modification. Residues 3-147 enclose the Globin domain; that stretch reads HLTDAEKATV…VASALAHKYH (145 aa). Ser-13 bears the Phosphoserine mark. N6-succinyllysine is present on Lys-18. 2 positions are modified to phosphoserine: Ser-51 and Ser-53. Positions 64 and 93 each coordinate heme b. At Arg-105 the chain carries Asymmetric dimethylarginine. Thr-124 carries the post-translational modification Phosphothreonine. Residue Cys-126 is modified to Phosphoserine; in variant Ser-126.

The protein belongs to the globin family. In terms of assembly, heterotetramer of two alpha chains and two beta chains. In terms of tissue distribution, red blood cells.

In terms of biological role, involved in oxygen transport from the lung to the various peripheral tissues. This chain is Hemoglobin subunit beta-2, found in Rattus norvegicus (Rat).